Here is a 529-residue protein sequence, read N- to C-terminus: BTB/POZ domain-containing protein 6 (529 aa).

The region spanning 127–197 is the BTB domain; sequence ADVHFIVGPA…LYSDEIDLEA (71 aa).

As to quaternary structure, homodimer and heterodimer. Interacts with cul3 via the BTB domain.

Its subcellular location is the cytoplasm. Its function is as follows. Adapter protein for the cul3 E3 ubiquitin-protein ligase complex. Involved in late neuronal development and muscle formation. The chain is BTB/POZ domain-containing protein 6 (btbd6) from Xenopus laevis (African clawed frog).